We begin with the raw amino-acid sequence, 561 residues long: Putative transport protein YbjL (561 aa).

Transmembrane regions (helical) follow at residues 8–28, 32–52, 66–86, 94–114, and 158–178; these read LLNGNYILLLFVVLALGLCLG, LGSVQLGNSIGVLVVSLLLGQ, FMLFIFCVGVEAGPNFFSIFF, MLALVMVGSALLIALGLGKLF, and NLSLGYALTYLIGLVSLIVGA. 2 consecutive RCK C-terminal domains span residues 200–288 and 292–373; these read RGLD…SFRN and VFDR…RIGF. 5 consecutive transmembrane segments (helical) span residues 383–403, 406–426, 447–467, 475–495, and 540–560; these read LLAFCAFFIIGLMIGMITFQF, FSFGIGNAAGLLFAGIMLGFL, FGLMVFMAGVGLSAGSGINNG, MLIAGLVVSLVPVVICFLFGA, and AIANVLLTLAGTLIVIIWPGL.

Belongs to the AAE transporter (TC 2.A.81) family. YbjL subfamily.

The protein resides in the cell membrane. This Salmonella paratyphi C (strain RKS4594) protein is Putative transport protein YbjL.